Here is a 1041-residue protein sequence, read N- to C-terminus: Leucine-rich repeat receptor-like protein kinase TDR (1041 aa).

The signal sequence occupies residues 1 to 29 (MKKKNISPSLVLHPLLLLLLPFFAFNSLA). Over 30 to 652 (LKFSPQLLSL…HHKEERPKKT (623 aa)) the chain is Extracellular. A disulfide bond links C69 and C76. 3 N-linked (GlcNAc...) asparagine glycosylation sites follow: N78, N92, and N111. LRR repeat units follow at residues 80–104 (TAQV…IRYL), 105–128 (SSLL…IFDL), 130–152 (KLTT…ISKL), 154–176 (FLKV…VSRL), 177–199 (RFLE…AYGG), 200–224 (LQRL…LGLL), 225–248 (TELQ…FALL), 250–272 (NLKY…LGNL), 273–296 (SNLE…YSNL), 297–319 (KSLK…GFST), 321–344 (KNLT…IGEL), 345–368 (PELT…LGSN), 369–392 (GKLE…LCHG), 394–416 (KLYK…LTRC), 418–439 (SLWR…GFGS), 440–464 (LRNL…FATA), 466–488 (VLQY…IWKA), 511–535 (CKSF…IGHC), 536–558 (EKLL…EIST), 559–583 (LPSI…FGSS), and 585–607 (TITT…SFAH). Residues 186–188 (GSY) are CLE peptide binding. Residues 233 to 235 (GYN) are CLE peptide binding. Residues N258 and N271 are each glycosylated (N-linked (GlcNAc...) asparagine). The segment at 303-307 (DFSSN) is CLE peptide binding. N-linked (GlcNAc...) asparagine glycans are attached at residues N322, N332, and N356. Positions 375-377 (DVS) are CLE peptide binding. Residue N378 is glycosylated (N-linked (GlcNAc...) asparagine). A disulfide bond links C390 and C416. The segment at 421–423 (RFR) is CLE peptide binding. N430, N442, N471, N525, and N542 each carry an N-linked (GlcNAc...) asparagine glycan. The cysteines at positions 511 and 535 are disulfide-linked. The N-linked (GlcNAc...) asparagine glycan is linked to N590. A disulfide bond links C620 and C628. The helical transmembrane segment at 653–673 (AGAIVWILAAAIGVGFFVLVA) threads the bilayer. Over 674–1041 (ATRCFQKSYG…HDVKCQRIGV (368 aa)) the chain is Cytoplasmic. The residue at position 710 (T710) is a Phosphothreonine. A Protein kinase domain is found at 719–1001 (SKTDNILGMG…DVLLILQEAK (283 aa)). ATP contacts are provided by residues 725 to 733 (LGMGSTGTV) and K747. Phosphotyrosine occurs at positions 798 and 839. The active-site Proton acceptor is D852. S884 is modified (phosphoserine). Residues Y892 and Y899 each carry the phosphotyrosine modification. The residue at position 900 (T900) is a Phosphothreonine.

This sequence belongs to the protein kinase superfamily. Ser/Thr protein kinase family. As to quaternary structure, interacts specifically with the mature peptides CLE41p and CLE44p, especially in the presence of SERK2. Interacts with LURE1.2. Widely expressed along the vascular strands. In roots and hypocotyls, confined to procambial cells.

The protein resides in the cell membrane. It carries out the reaction L-seryl-[protein] + ATP = O-phospho-L-seryl-[protein] + ADP + H(+). The catalysed reaction is L-threonyl-[protein] + ATP = O-phospho-L-threonyl-[protein] + ADP + H(+). Functionally, acts with CLE41p and CLE44p peptides as a ligand-receptor pair in a signal transduction pathway involved in the regulation of procambium maintenance and polarity during vascular-tissue development. Mediates repression of tracheary element differentiation and the promotion of procambial cells formation and polar division adjacent to phloem cells in the veins. In Arabidopsis thaliana (Mouse-ear cress), this protein is Leucine-rich repeat receptor-like protein kinase TDR.